The primary structure comprises 440 residues: RNA polymerase II C-terminal domain phosphatase-like 4 (440 aa).

The segment covering 1–36 (MSVASDSPVHSSSSSDDLAAFLDAELDSASDASSGP) has biased composition (low complexity). Residues 1-49 (MSVASDSPVHSSSSSDDLAAFLDAELDSASDASSGPSEEEEAEDDVESG) form a disordered region. Residues 37–47 (SEEEEAEDDVE) show a composition bias toward acidic residues. Residues 118-292 (QRQRKLYLVL…DHRYKSLSEL (175 aa)) form the FCP1 homology domain. The BRCT domain occupies 337-429 (VRKEILKGCK…MKQPEENFGL (93 aa)).

Interacts with RAP74. Requires Mg(2+) as cofactor. Co(2+) is required as a cofactor. The cofactor is Mn(2+).

The protein localises to the nucleus. It carries out the reaction O-phospho-L-seryl-[protein] + H2O = L-seryl-[protein] + phosphate. It catalyses the reaction O-phospho-L-threonyl-[protein] + H2O = L-threonyl-[protein] + phosphate. Processively dephosphorylates 'Ser-2' and/or 'Ser-5' of the heptad repeats YSPTSPS in the C-terminal domain of the largest RNA polymerase II subunit (RPB1). This promotes the activity of RNA polymerase II. Required for normal plant growth. In Arabidopsis thaliana (Mouse-ear cress), this protein is RNA polymerase II C-terminal domain phosphatase-like 4 (CPL4).